Consider the following 69-residue polypeptide: Cytochrome c oxidase copper chaperone (69 aa).

Positions 23 and 24 each coordinate Cu cation. A CHCH domain is found at 23 to 65 (CCVCKPEKEERDTCILFNGQDSEKCKEFIEKYKECMKGYGFEV). 2 short sequence motifs (cx9C motif) span residues 26–36 (CKPEKEERDTC) and 47–57 (CKEFIEKYKEC). 2 disulfides stabilise this stretch: Cys26–Cys57 and Cys36–Cys47.

The protein belongs to the COX17 family.

The protein resides in the mitochondrion intermembrane space. Its function is as follows. Copper chaperone for cytochrome c oxidase (COX). Binds two copper ions and deliver them to the Cu(A) site of COX. In Saccharomyces cerevisiae (strain ATCC 204508 / S288c) (Baker's yeast), this protein is Cytochrome c oxidase copper chaperone (COX17).